The sequence spans 106 residues: uncharacterized protein (106 aa).

Belongs to the HesB/IscA family.

This is an uncharacterized protein from Sinorhizobium fredii (strain NBRC 101917 / NGR234).